A 240-amino-acid polypeptide reads, in one-letter code: MGKRLISQNRGRGTPKYRSPTHKRKGAVKYRSYDEMEKDGKILGTVVDILHDPGRSAPVAKVRFANDEERLVLIPEGIQVGEEIECGISAEIKPGNVLPLGEIPEGIPVYNIETIPGDGGKLVRSGGCYAHVISHDVGKTIVKLPSGFSKVLNPACRATVGVVAGGGRKEKPFVKAGKKYHSLSAKAVAWPKVRGVAMNAVDHPYGGGRHQHLGKPSSVSRHTSPGRKVGHIASRRTGRK.

The segment covering Met1–Gly11 has biased composition (polar residues). 2 disordered regions span residues Met1–Val28 and Gly206–Lys240. Basic residues-rich tracts occupy residues Gly13 to Val28 and Ser224 to Lys240.

Belongs to the universal ribosomal protein uL2 family. In terms of assembly, part of the 50S ribosomal subunit. Forms a bridge to the 30S subunit in the 70S ribosome.

One of the primary rRNA binding proteins. Required for association of the 30S and 50S subunits to form the 70S ribosome, for tRNA binding and peptide bond formation. It has been suggested to have peptidyltransferase activity; this is somewhat controversial. Makes several contacts with the 16S rRNA in the 70S ribosome. This chain is Large ribosomal subunit protein uL2, found in Methanococcus maripaludis (strain C5 / ATCC BAA-1333).